The chain runs to 517 residues: Probable mannosyltransferase KTR7 (517 aa).

Topologically, residues 1–23 are cytoplasmic; sequence MAIRLNPKVRRFLLDKCRQKRYG. The chain crosses the membrane as a helical; Signal-anchor for type II membrane protein span at residues 24-44; the sequence is FLFLGCIFAILYCMGTWPFFA. Residues 45–85 are stem region; the sequence is KDIVHDPNNLPYSLQDYSTDKDEPFFRGCTDTKLYLQNPAY. The Lumenal segment spans residues 45-517; it reads KDIVHDPNNL…IRRENFRVIE (473 aa). The catalytic stretch occupies residues 86 to 517; sequence SKMNASFVML…IRRENFRVIE (432 aa). 2 N-linked (GlcNAc...) asparagine glycosylation sites follow: asparagine 89 and asparagine 144. Glutamate 367 acts as the Nucleophile in catalysis.

Belongs to the glycosyltransferase 15 family.

It is found in the membrane. Its function is as follows. Possible glycosyltransferase that transfers an alpha-D-mannosyl residue from GDP-mannose into lipid-linked oligosaccharide, forming an alpha-(1-&gt;2)-D-mannosyl-D-mannose linkage. The protein is Probable mannosyltransferase KTR7 (KTR7) of Saccharomyces cerevisiae (strain ATCC 204508 / S288c) (Baker's yeast).